The following is a 211-amino-acid chain: ATP phosphoribosyltransferase (211 aa).

The protein belongs to the ATP phosphoribosyltransferase family. Short subfamily. As to quaternary structure, heteromultimer composed of HisG and HisZ subunits.

The protein localises to the cytoplasm. The enzyme catalyses 1-(5-phospho-beta-D-ribosyl)-ATP + diphosphate = 5-phospho-alpha-D-ribose 1-diphosphate + ATP. It participates in amino-acid biosynthesis; L-histidine biosynthesis; L-histidine from 5-phospho-alpha-D-ribose 1-diphosphate: step 1/9. Catalyzes the condensation of ATP and 5-phosphoribose 1-diphosphate to form N'-(5'-phosphoribosyl)-ATP (PR-ATP). Has a crucial role in the pathway because the rate of histidine biosynthesis seems to be controlled primarily by regulation of HisG enzymatic activity. This Rippkaea orientalis (strain PCC 8801 / RF-1) (Cyanothece sp. (strain PCC 8801)) protein is ATP phosphoribosyltransferase.